Consider the following 382-residue polypeptide: 8-amino-7-oxononanoate synthase (382 aa).

A substrate-binding site is contributed by R26. Pyridoxal 5'-phosphate is bound at residue 104-105 (GY). H129 provides a ligand contact to substrate. Pyridoxal 5'-phosphate is bound by residues S175, 200–203 (DEAH), and 232–235 (TLSK). K235 is subject to N6-(pyridoxal phosphate)lysine. Position 345 (T345) interacts with substrate.

The protein belongs to the class-II pyridoxal-phosphate-dependent aminotransferase family. BioF subfamily. In terms of assembly, homodimer. Pyridoxal 5'-phosphate serves as cofactor.

It catalyses the reaction 6-carboxyhexanoyl-[ACP] + L-alanine + H(+) = (8S)-8-amino-7-oxononanoate + holo-[ACP] + CO2. It functions in the pathway cofactor biosynthesis; biotin biosynthesis. Catalyzes the decarboxylative condensation of pimeloyl-[acyl-carrier protein] and L-alanine to produce 8-amino-7-oxononanoate (AON), [acyl-carrier protein], and carbon dioxide. This Mycolicibacterium smegmatis (strain ATCC 700084 / mc(2)155) (Mycobacterium smegmatis) protein is 8-amino-7-oxononanoate synthase (bioF).